Here is a 240-residue protein sequence, read N- to C-terminus: Chromatin structure-remodeling complex protein BSH (240 aa).

Belongs to the SNF5 family. In terms of assembly, interacts with SWI3A and SWI3B, but not with BRM. Expressed in roots, stems, leaves, flowers and siliques.

It is found in the nucleus. Its function is as follows. Component of a multiprotein complex equivalent of the yeast SWI/SNF complex, an ATP-dependent chromatin-remodeling complex, which is required for the positive and negative regulation of gene expression of a large number of genes. It changes chromatin structure by altering DNA-histone contacts within a nucleosome, leading eventually to a change in nucleosome position, thus facilitating or repressing binding of gene-specific transcription factors. This is Chromatin structure-remodeling complex protein BSH (BSH) from Arabidopsis thaliana (Mouse-ear cress).